A 502-amino-acid polypeptide reads, in one-letter code: Glycerol kinase (502 aa).

T14 is a binding site for ADP. Residues T14, T15, and S16 each contribute to the ATP site. T14 is a sn-glycerol 3-phosphate binding site. R18 serves as a coordination point for ADP. R84, E85, Y136, and D246 together coordinate sn-glycerol 3-phosphate. R84, E85, Y136, D246, and Q247 together coordinate glycerol. ADP is bound by residues T268 and G311. 4 residues coordinate ATP: T268, G311, Q315, and G412. The ADP site is built by G412 and N416.

It belongs to the FGGY kinase family. In terms of assembly, homotetramer and homodimer (in equilibrium). Heterodimer with EIIA-Glc. Binds 1 zinc ion per glycerol kinase EIIA-Glc dimer. The zinc ion is important for dimerization.

The enzyme catalyses glycerol + ATP = sn-glycerol 3-phosphate + ADP + H(+). Its pathway is polyol metabolism; glycerol degradation via glycerol kinase pathway; sn-glycerol 3-phosphate from glycerol: step 1/1. Its activity is regulated as follows. Activity of this regulatory enzyme is affected by several metabolites. Allosterically and non-competitively inhibited by fructose 1,6-bisphosphate (FBP) and unphosphorylated phosphocarrier protein EIIA-Glc (III-Glc), an integral component of the bacterial phosphotransferase (PTS) system. In terms of biological role, key enzyme in the regulation of glycerol uptake and metabolism. Catalyzes the phosphorylation of glycerol to yield sn-glycerol 3-phosphate. The chain is Glycerol kinase from Shigella dysenteriae serotype 1 (strain Sd197).